The following is a 313-amino-acid chain: Acetylglutamate kinase (313 aa).

Residues 84 to 85, Arg-106, and Asn-210 contribute to the substrate site; that span reads GG.

Belongs to the acetylglutamate kinase family. ArgB subfamily.

Its subcellular location is the cytoplasm. It catalyses the reaction N-acetyl-L-glutamate + ATP = N-acetyl-L-glutamyl 5-phosphate + ADP. It functions in the pathway amino-acid biosynthesis; L-arginine biosynthesis; N(2)-acetyl-L-ornithine from L-glutamate: step 2/4. In terms of biological role, catalyzes the ATP-dependent phosphorylation of N-acetyl-L-glutamate. The polypeptide is Acetylglutamate kinase (Gluconacetobacter diazotrophicus (strain ATCC 49037 / DSM 5601 / CCUG 37298 / CIP 103539 / LMG 7603 / PAl5)).